A 152-amino-acid polypeptide reads, in one-letter code: Psoriasis susceptibility 1 candidate gene 1 protein homolog (152 aa).

The segment covering 1–31 has biased composition (polar residues); the sequence is MTCTDQKSHSQRALGTQTPALQGPQLLNTDP. Disordered stretches follow at residues 1 to 39 and 132 to 152; these read MTCT…TRPP and APTL…SSLI.

In Pan troglodytes (Chimpanzee), this protein is Psoriasis susceptibility 1 candidate gene 1 protein homolog (PSORS1C1).